Reading from the N-terminus, the 349-residue chain is Protein AMBP (349 aa).

The signal sequence occupies residues 1-19; that stretch reads MQGLGALFLLLTACLTLKA. 3-hydroxy-L-kynurenine-binding residues include cysteine 52 and lysine 110. An intrachain disulfide couples cysteine 90 to cysteine 187. Residue asparagine 114 is glycosylated (N-linked (GlcNAc...) asparagine). Residues lysine 136 and lysine 148 each contribute to the 3-hydroxy-L-kynurenine site. O-linked (Xyl...) (chondroitin sulfate) serine glycosylation occurs at serine 214. 6 cysteine pairs are disulfide-bonded: cysteine 230-cysteine 280, cysteine 239-cysteine 263, cysteine 255-cysteine 276, cysteine 286-cysteine 336, cysteine 295-cysteine 319, and cysteine 311-cysteine 332. BPTI/Kunitz inhibitor domains are found at residues 230-280 and 286-336; these read CQLN…LQTC and CNLP…KEYC. Asparagine 233 carries an N-linked (GlcNAc...) asparagine glycan.

It in the N-terminal section; belongs to the calycin superfamily. Lipocalin family. In terms of assembly, monomer. Homodimer. In plasma, it occurs as a monomer or dimer and in covalently-linked complexes with immunoglobulin A (IgA), ALB/albumin and F2/prothrombin. Chromophore-bound alpha-1-microglobulin interacts with the constant region of immunoglobulin A. Chromophore-bound alpha-1-microglobulin interacts with ALB with molar ratio 2:1 and 1:1; this interaction does not prevent fatty acid binding to ALB. Interacts with F2/prothrombin (via N-terminus) with molar ratio 2:1 and 1:1; this interaction does not prevent the activation of prothrombin to thrombin. Interacts with NDUFAB1, a subunit of mitochondrial complex I. Interacts with FN1. I-alpha-I plasma protease inhibitors are assembled from one or two heavy chains (HC) and one light chain, bikunin. Inter-alpha-inhibitor (I-alpha-I) is composed of ITIH1/HC1, ITIH2/HC2 and bikunin, and pre-alpha-inhibitor (P-alpha-I) of ITIH3/HC3 and bikunin. Interacts with TNFAIP6 (via Link domain). As to quaternary structure, monomer. Also occurs as a complex with tryptase in mast cells. Post-translationally, the precursor is proteolytically processed into separately functioning proteins. 3-hydroxykynurenine, an oxidized tryptophan metabolite that is common in biological fluids, reacts with Cys-53, Lys-111, Lys-137, and Lys-149 to form heterogeneous polycyclic chromophores including hydroxanthommatin. The reaction by alpha-1-microglobulin is autocatalytic; the human protein forms chromophore even when expressed in insect and bacterial cells. The chromophore can react with accessible cysteines forming non-reducible thioether cross-links with other molecules of alpha-1-microglobulin or with other proteins such as Ig alpha-1 chain C region 'Cys-352'. In terms of processing, heavy chains are interlinked with bikunin via a chondroitin 4-sulfate bridge to the C-terminal aspartate. Post-translationally, proteolytically cleaved by PRSS3 at Kunitz domain 2. In terms of tissue distribution, expressed by the liver and secreted in plasma.

It localises to the secreted. The protein localises to the endoplasmic reticulum. It is found in the cytoplasm. The protein resides in the cytosol. Its subcellular location is the cell membrane. It localises to the nucleus membrane. The protein localises to the mitochondrion inner membrane. It is found in the extracellular space. The protein resides in the extracellular matrix. Functionally, antioxidant and tissue repair protein with reductase, heme-binding and radical-scavenging activities. Removes and protects against harmful oxidants and repairs macromolecules in intravascular and extravascular spaces and in intracellular compartments. Intravascularly, plays a regulatory role in red cell homeostasis by preventing heme- and reactive oxygen species-induced cell damage. Binds and degrades free heme to protect fetal and adult red blood cells from hemolysis. Reduces extracellular methemoglobin, a Fe3+ (ferric) form of hemoglobin that cannot bind oxygen, back to the Fe2+ (ferrous) form deoxyhemoglobin, which has oxygen-carrying potential. Upon acute inflammation, inhibits oxidation of low-density lipoprotein particles by MPO and limits vascular damage. Extravascularly, protects from oxidation products formed on extracellular matrix structures and cell membranes. Catalyzes the reduction of carbonyl groups on oxidized collagen fibers and preserves cellular and extracellular matrix ultrastructures. Importantly, counteracts the oxidative damage at blood-placenta interface, preventing leakage of free fetal hemoglobin into the maternal circulation. Intracellularly, has a role in maintaining mitochondrial redox homeostasis. Bound to complex I of the respiratory chain of mitochondria, may scavenge free radicals and preserve mitochondrial ATP synthesis. Protects renal tubule epithelial cells from heme-induced oxidative damage to mitochondria. Reduces cytochrome c from Fe3+ (ferric) to the Fe2+ (ferrous) state through formation of superoxide anion radicals in the presence of ascorbate or NADH/NADPH electron donor cofactors, ascorbate being the preferred cofactor. Has a chaperone role in facilitating the correct folding of bikunin in the endoplasmic reticulum compartment. Its function is as follows. Kunitz-type serine protease inhibitor and structural component of extracellular matrix with a role in extracellular space remodeling and cell adhesion. Among others, has antiprotease activity toward kallikrein, a protease involved in airway inflammation; inhibits GZMK/granzyme, a granule-stored serine protease involved in NK and T cell cytotoxic responses; and inhibits PLG/plasmin, a protease required for activation of matrix metalloproteinases. As part of I-alpha-I complex, provides for the heavy chains to be transferred from I-alpha-I complex to hyaluronan in the presence of TNFAIP6, in a dynamic process that releases free bikunin and remodels extracellular matrix proteoglycan structures. Free bikunin, but not its heavy chain-bound form, acts as a potent protease inhibitor in airway secretions. Part of hyaluronan-rich extracellular matrix that surrounds oocyte during cumulus oophorus expansion, an indispensable process for proper ovulation. Also inhibits calcium oxalate crystallization. In terms of biological role, kunitz-type serine protease inhibitor. Has high catalytic efficiency for F10/blood coagulation factor Xa and may act as an anticoagulant by inhibiting prothrombin activation. Inhibits trypsin and mast cell CMA1/chymase and tryptase proteases. The polypeptide is Protein AMBP (Ambp) (Rattus norvegicus (Rat)).